Consider the following 334-residue polypeptide: Large ribosomal subunit protein uL3 (334 aa).

A compositionally biased stretch (basic residues) spans 1–10; that stretch reads MGMKKNRPRR. The tract at residues 1 to 21 is disordered; it reads MGMKKNRPRRGSLAFSPRKRA.

This sequence belongs to the universal ribosomal protein uL3 family. Part of the 50S ribosomal subunit. Forms a cluster with proteins L14 and L24e.

Its function is as follows. One of the primary rRNA binding proteins, it binds directly near the 3'-end of the 23S rRNA, where it nucleates assembly of the 50S subunit. This is Large ribosomal subunit protein uL3 from Methanococcus vannielii (strain ATCC 35089 / DSM 1224 / JCM 13029 / OCM 148 / SB).